Consider the following 567-residue polypeptide: Phenylalanine--tRNA ligase beta subunit (567 aa).

A B5 domain is found at 287–362; sequence YFQEEVEFNV…IGEGLASFHP (76 aa). Mg(2+)-binding residues include aspartate 340, aspartate 346, glutamate 349, and aspartate 350.

Belongs to the phenylalanyl-tRNA synthetase beta subunit family. Type 2 subfamily. In terms of assembly, tetramer of two alpha and two beta subunits. It depends on Mg(2+) as a cofactor.

The protein localises to the cytoplasm. It carries out the reaction tRNA(Phe) + L-phenylalanine + ATP = L-phenylalanyl-tRNA(Phe) + AMP + diphosphate + H(+). The protein is Phenylalanine--tRNA ligase beta subunit of Borreliella afzelii (strain PKo) (Borrelia afzelii).